The following is a 340-amino-acid chain: Probable serine acetyltransferase 5 (340 aa).

Composition is skewed to low complexity over residues 1-17 (MLVV…RVAA) and 54-64 (PAEVVPAFAPP). Positions 1–67 (MLVVVARKSS…VPAFAPPESE (67 aa)) are disordered.

It belongs to the transferase hexapeptide repeat family. Homomultimer.

The catalysed reaction is L-serine + acetyl-CoA = O-acetyl-L-serine + CoA. Its pathway is amino-acid biosynthesis; L-cysteine biosynthesis; L-cysteine from L-serine: step 1/2. The protein is Probable serine acetyltransferase 5 (SAT5) of Oryza sativa subsp. japonica (Rice).